Here is a 488-residue protein sequence, read N- to C-terminus: Envelope glycoprotein gp62 (488 aa).

A signal peptide spans 1–20 (MGKFLATLILFFQFCPLILG). Residues 21–442 (DYSPSCCTLT…LGLSQWAREA (422 aa)) lie on the Extracellular side of the membrane. Asparagine 140 and asparagine 222 each carry an N-linked (GlcNAc...) asparagine; by host glycan. The CXXC motif lies at 225 to 228 (CIVC). Disulfide bonds link cysteine 225-cysteine 228, cysteine 225-cysteine 401, and cysteine 393-cysteine 400. Residues asparagine 244 and asparagine 272 are each glycosylated (N-linked (GlcNAc...) asparagine; by host). Residues 313–333 (AVPVAVWLVSALAIGAGVAGG) are fusion peptide. Coiled-coil stretches lie at residues 341–387 (ASGK…LLFW) and 397–429 (QEQC…GWGL). The tract at residues 376-392 (AQNRRGLDLLFWEQGGL) is immunosuppression. The CX6CC motif lies at 393-401 (CKALQEQCC). Asparagine 404 is a glycosylation site (N-linked (GlcNAc...) asparagine; by host). A helical transmembrane segment spans residues 443 to 463 (LQTGITLVALLLLVILAGPCI). Residue cysteine 462 is the site of S-palmitoyl cysteine; by host attachment. At 464-488 (LRQLRHLPSRVRYPHYSLINPESSL) the chain is on the cytoplasmic side.

As to quaternary structure, the mature envelope protein (Env) consists of a trimer of SU-TM heterodimers attached by a labile interchain disulfide bond. Specific enzymatic cleavages in vivo yield mature proteins. Envelope glycoproteins are synthesized as an inactive precursor that is N-glycosylated and processed likely by host cell furin or by a furin-like protease in the Golgi to yield the mature SU and TM proteins. The cleavage site between SU and TM requires the minimal sequence [KR]-X-[KR]-R. In terms of processing, the CXXC motif is highly conserved across a broad range of retroviral envelope proteins. It is thought to participate in the formation of a labile disulfide bond possibly with the CX6CC motif present in the transmembrane protein. Isomerization of the intersubunit disulfide bond to an SU intrachain disulfide bond is thought to occur upon receptor recognition in order to allow membrane fusion. Post-translationally, the transmembrane protein is palmitoylated.

It is found in the virion membrane. The protein resides in the host cell membrane. The surface protein (SU) attaches the virus to the host cell by binding to its receptor. This interaction triggers the refolding of the transmembrane protein (TM) and is thought to activate its fusogenic potential by unmasking its fusion peptide. Fusion occurs at the host cell plasma membrane. Functionally, the transmembrane protein (TM) acts as a class I viral fusion protein. Under the current model, the protein has at least 3 conformational states: pre-fusion native state, pre-hairpin intermediate state, and post-fusion hairpin state. During viral and target cell membrane fusion, the coiled coil regions (heptad repeats) assume a trimer-of-hairpins structure, positioning the fusion peptide in close proximity to the C-terminal region of the ectodomain. The formation of this structure appears to drive apposition and subsequent fusion of viral and target cell membranes. Membranes fusion leads to delivery of the nucleocapsid into the cytoplasm. This Human T-cell leukemia virus 1 (isolate Caribbea CH subtype A) (HTLV-1) protein is Envelope glycoprotein gp62 (env).